Consider the following 661-residue polypeptide: uncharacterized protein (661 aa).

The next 7 membrane-spanning stretches (helical) occupy residues 37–57 (VFLGLILALMVVVVALTLFLS), 87–107 (INSPAPWIGLVALAMAGAVFI), 120–140 (WLLLGVLLSLLFVVNGLNVIL), 158–178 (VFWQFLWIYGIVIVVAIPIIV), 243–263 (LLDILDSILTLISFTAILYTI), 266–286 (TLMWGLIGYAVFGTVVAIAIG), and 341–361 (FNLLIIWQALISLFQLGYNYF). In terms of domain architecture, ABC transmembrane type-1 spans 123–410 (LGVLLSLLFV…VTNQIQNITE (288 aa)). An ABC transporter domain is found at 453 to 659 (VALENVTLSP…AEGRWQISPI (207 aa)). 487 to 494 (GPSGSGKS) is a binding site for ATP.

It belongs to the ABC transporter superfamily.

Its subcellular location is the cell inner membrane. This is an uncharacterized protein from Synechocystis sp. (strain ATCC 27184 / PCC 6803 / Kazusa).